The sequence spans 608 residues: Protein FAM151A (608 aa).

Residues Trp14–Leu34 form a helical membrane-spanning segment. Residues Val586–Gly596 show a composition bias toward polar residues. The disordered stretch occupies residues Val586–Arg608.

Belongs to the menorin family.

The protein resides in the membrane. The chain is Protein FAM151A (Fam151a) from Mus musculus (Mouse).